We begin with the raw amino-acid sequence, 521 residues long: U4/U6 small nuclear ribonucleoprotein Prp4 (521 aa).

At K26 the chain carries N6-acetyllysine. WD repeat units lie at residues 228–267 (GDDR…LLHT), 270–317 (GHNT…PVAD), 320–359 (GHTV…EILH), 362–401 (GHSM…CIMF), 404–443 (GHLK…CVYT), 446–486 (AHQN…PLKT), and 489–521 (GHEG…WMAE).

In terms of assembly, component of the precatalytic spliceosome (spliceosome B complex). Component of the U4/U6-U5 tri-snRNP complex, a building block of the precatalytic spliceosome (spliceosome B complex). The U4/U6-U5 tri-snRNP complex is composed of the U4, U6 and U5 snRNAs and at least PRPF3, PRPF4, PRPF6, PRPF8, PRPF31, SNRNP200, TXNL4A, SNRNP40, SNRPB, SNRPD1, SNRPD2, SNRPD3, SNRPE, SNRPF, SNRPG, DDX23, CD2BP2, PPIH, SNU13, EFTUD2, SART1 and USP39, plus LSM2, LSM3, LSM4, LSM5, LSM6, LSM7 and LSM8. Interacts directly with PRPF18, PPIH and PRPF3. Part of a heteromeric complex containing PPIH, PRPF3 and PRPF4 that is stable in the absence of RNA. Interacts with ERCC6.

The protein resides in the nucleus. It localises to the nucleus speckle. Plays a role in pre-mRNA splicing as component of the U4/U6-U5 tri-snRNP complex that is involved in spliceosome assembly, and as component of the precatalytic spliceosome (spliceosome B complex). This Pongo abelii (Sumatran orangutan) protein is U4/U6 small nuclear ribonucleoprotein Prp4 (PRPF4).